Here is a 100-residue protein sequence, read N- to C-terminus: NADH-quinone oxidoreductase subunit K (100 aa).

Transmembrane regions (helical) follow at residues 4–24, 29–49, and 61–81; these read TSYY…GVLL, IVIF…LVAF, and IVFF…ALLV.

It belongs to the complex I subunit 4L family. NDH-1 is composed of 14 different subunits. Subunits NuoA, H, J, K, L, M, N constitute the membrane sector of the complex.

The protein resides in the cell membrane. It carries out the reaction a quinone + NADH + 5 H(+)(in) = a quinol + NAD(+) + 4 H(+)(out). NDH-1 shuttles electrons from NADH, via FMN and iron-sulfur (Fe-S) centers, to quinones in the respiratory chain. The immediate electron acceptor for the enzyme in this species is believed to be ubiquinone. Couples the redox reaction to proton translocation (for every two electrons transferred, four hydrogen ions are translocated across the cytoplasmic membrane), and thus conserves the redox energy in a proton gradient. The sequence is that of NADH-quinone oxidoreductase subunit K from Chloroflexus aggregans (strain MD-66 / DSM 9485).